The chain runs to 177 residues: Large ribosomal subunit protein uL10 (177 aa).

Belongs to the universal ribosomal protein uL10 family. In terms of assembly, part of the ribosomal stalk of the 50S ribosomal subunit. The N-terminus interacts with L11 and the large rRNA to form the base of the stalk. The C-terminus forms an elongated spine to which L12 dimers bind in a sequential fashion forming a multimeric L10(L12)X complex.

Its function is as follows. Forms part of the ribosomal stalk, playing a central role in the interaction of the ribosome with GTP-bound translation factors. The polypeptide is Large ribosomal subunit protein uL10 (Leptospira biflexa serovar Patoc (strain Patoc 1 / Ames)).